Consider the following 361-residue polypeptide: Probable mannose-1-phosphate guanylyltransferase 1 (361 aa).

GDP-alpha-D-mannose contacts are provided by Leu-6 and Val-7. The diphosphate site is built by Gly-9, Gly-11, Thr-12, Arg-13, and Lys-23. The GDP-alpha-D-mannose site is built by Gly-85, Asn-109, Asp-111, Gly-146, and Asn-173.

The protein belongs to the transferase hexapeptide repeat family.

It catalyses the reaction alpha-D-mannose 1-phosphate + GTP + H(+) = GDP-alpha-D-mannose + diphosphate. The protein operates within nucleotide-sugar biosynthesis; GDP-alpha-D-mannose biosynthesis; GDP-alpha-D-mannose from alpha-D-mannose 1-phosphate (GTP route): step 1/1. In terms of biological role, catalyzes a reaction of the Smirnoff-Wheeler pathway, the major route to ascorbate biosynthesis in plants. In Oryza sativa subsp. japonica (Rice), this protein is Probable mannose-1-phosphate guanylyltransferase 1.